A 123-amino-acid chain; its full sequence is Small ribosomal subunit protein uS12 (123 aa).

Position 89 is a 3-methylthioaspartic acid (Asp89).

The protein belongs to the universal ribosomal protein uS12 family. As to quaternary structure, part of the 30S ribosomal subunit. Contacts proteins S8 and S17. May interact with IF1 in the 30S initiation complex.

Functionally, with S4 and S5 plays an important role in translational accuracy. In terms of biological role, interacts with and stabilizes bases of the 16S rRNA that are involved in tRNA selection in the A site and with the mRNA backbone. Located at the interface of the 30S and 50S subunits, it traverses the body of the 30S subunit contacting proteins on the other side and probably holding the rRNA structure together. The combined cluster of proteins S8, S12 and S17 appears to hold together the shoulder and platform of the 30S subunit. In Methylorubrum extorquens (strain PA1) (Methylobacterium extorquens), this protein is Small ribosomal subunit protein uS12.